We begin with the raw amino-acid sequence, 452 residues long: Maltoporin (452 aa).

The N-terminal stretch at 1-25 (MMITLRKLPLAVAVAAGVMSAQAMA) is a signal peptide.

This sequence belongs to the porin LamB (TC 1.B.3) family. In terms of assembly, homotrimer formed of three 18-stranded antiparallel beta-barrels, containing three independent channels.

The protein localises to the cell outer membrane. The enzyme catalyses beta-maltose(in) = beta-maltose(out). Functionally, involved in the transport of maltose and maltodextrins. The chain is Maltoporin from Salmonella choleraesuis (strain SC-B67).